We begin with the raw amino-acid sequence, 176 residues long: Large ribosomal subunit protein uL6 (176 aa).

It belongs to the universal ribosomal protein uL6 family. Part of the 50S ribosomal subunit.

Its function is as follows. This protein binds to the 23S rRNA, and is important in its secondary structure. It is located near the subunit interface in the base of the L7/L12 stalk, and near the tRNA binding site of the peptidyltransferase center. This is Large ribosomal subunit protein uL6 from Shewanella sediminis (strain HAW-EB3).